The sequence spans 146 residues: Large ribosomal subunit protein uL15 (146 aa).

Positions 1-58 are disordered; the sequence is MRLHELHPAPGSRPRATRVGRGIGSGLGKTSGRGHKGQKARSGGGVRRGFEGGQMPLT. Residues 21–31 show a composition bias toward gly residues; sequence RGIGSGLGKTS.

The protein belongs to the universal ribosomal protein uL15 family. Part of the 50S ribosomal subunit.

In terms of biological role, binds to the 23S rRNA. The polypeptide is Large ribosomal subunit protein uL15 (Moorella thermoacetica (strain ATCC 39073 / JCM 9320)).